Here is a 268-residue protein sequence, read N- to C-terminus: Phosphate import ATP-binding protein PstB 2 (268 aa).

The ABC transporter domain maps to 22–263; the sequence is MALTGVNFYY…PKVKRTEDYI (242 aa). An ATP-binding site is contributed by 54–61; sequence GPSGCGKS.

The protein belongs to the ABC transporter superfamily. Phosphate importer (TC 3.A.1.7) family. The complex is composed of two ATP-binding proteins (PstB), two transmembrane proteins (PstC and PstA) and a solute-binding protein (PstS).

The protein localises to the cell inner membrane. It catalyses the reaction phosphate(out) + ATP + H2O = ADP + 2 phosphate(in) + H(+). In terms of biological role, part of the ABC transporter complex PstSACB involved in phosphate import. Responsible for energy coupling to the transport system. The protein is Phosphate import ATP-binding protein PstB 2 of Rhizobium johnstonii (strain DSM 114642 / LMG 32736 / 3841) (Rhizobium leguminosarum bv. viciae).